The following is an 89-amino-acid chain: Small ribosomal subunit protein uS15 (89 aa).

It belongs to the universal ribosomal protein uS15 family. As to quaternary structure, part of the 30S ribosomal subunit. Forms a bridge to the 50S subunit in the 70S ribosome, contacting the 23S rRNA.

Functionally, one of the primary rRNA binding proteins, it binds directly to 16S rRNA where it helps nucleate assembly of the platform of the 30S subunit by binding and bridging several RNA helices of the 16S rRNA. Its function is as follows. Forms an intersubunit bridge (bridge B4) with the 23S rRNA of the 50S subunit in the ribosome. The polypeptide is Small ribosomal subunit protein uS15 (Agrobacterium fabrum (strain C58 / ATCC 33970) (Agrobacterium tumefaciens (strain C58))).